A 313-amino-acid chain; its full sequence is Homoserine O-succinyltransferase (313 aa).

Cysteine 142 functions as the Acyl-thioester intermediate in the catalytic mechanism. Residues lysine 163 and serine 192 each coordinate substrate. The Proton acceptor role is filled by histidine 235. Glutamate 237 is a catalytic residue. Residue arginine 249 participates in substrate binding.

This sequence belongs to the MetA family.

Its subcellular location is the cytoplasm. The enzyme catalyses L-homoserine + succinyl-CoA = O-succinyl-L-homoserine + CoA. It functions in the pathway amino-acid biosynthesis; L-methionine biosynthesis via de novo pathway; O-succinyl-L-homoserine from L-homoserine: step 1/1. Functionally, transfers a succinyl group from succinyl-CoA to L-homoserine, forming succinyl-L-homoserine. This is Homoserine O-succinyltransferase from Vibrio atlanticus (strain LGP32) (Vibrio splendidus (strain Mel32)).